The chain runs to 468 residues: Probable Xaa-Pro aminopeptidase PEPP (468 aa).

4 residues coordinate Mn(2+): aspartate 264, aspartate 275, glutamate 398, and glutamate 438.

The protein belongs to the peptidase M24B family. Requires Mn(2+) as cofactor.

The enzyme catalyses Release of any N-terminal amino acid, including proline, that is linked to proline, even from a dipeptide or tripeptide.. In terms of biological role, catalyzes the removal of a penultimate prolyl residue from the N-termini of peptides. The sequence is that of Probable Xaa-Pro aminopeptidase PEPP (PEPP) from Paracoccidioides brasiliensis (strain Pb18).